A 319-amino-acid chain; its full sequence is HPr kinase/phosphorylase (319 aa).

Residues histidine 140 and lysine 161 contribute to the active site. ATP is bound at residue 155–162; that stretch reads GDSGVGKS. Position 162 (serine 162) interacts with Mg(2+). Aspartate 179 serves as the catalytic Proton acceptor; for phosphorylation activity. Proton donor; for dephosphorylation activity. The segment at 203 to 212 is important for the catalytic mechanism of both phosphorylation and dephosphorylation; it reads LEIRGLGIID. Residue glutamate 204 coordinates Mg(2+). Arginine 245 is an active-site residue. Positions 266–271 are important for the catalytic mechanism of dephosphorylation; it reads PVKVGR.

It belongs to the HPrK/P family. In terms of assembly, homohexamer, arranged as bilayered trimers. Six HPr molecules bind to the hexamer at sites that overlap two of its subunits. Mg(2+) serves as cofactor.

The catalysed reaction is [HPr protein]-L-serine + ATP = [HPr protein]-O-phospho-L-serine + ADP + H(+). The enzyme catalyses [HPr protein]-O-phospho-L-serine + phosphate + H(+) = [HPr protein]-L-serine + diphosphate. With respect to regulation, kinase activity is slightly activated by fructose 1,6-bisphosphate (FBP), and inhibited by inorganic phosphate (Pi), but FBP prevents kinase inhibition by Pi. Dephosphorylation of P-Ser-HPr is slightly inhibited by FBP. Catalyzes the ATP- as well as the pyrophosphate-dependent phosphorylation of 'Ser-46' in HPr, a phosphocarrier protein of the phosphoenolpyruvate-dependent sugar phosphotransferase system (PTS). HprK/P also catalyzes the pyrophosphate-producing, inorganic phosphate-dependent dephosphorylation (phosphorolysis) of seryl-phosphorylated HPr (P-Ser-HPr). The two antagonistic activities of HprK/P are regulated by several intracellular metabolites, which change their concentration in response to the absence or presence of rapidly metabolisable carbon sources (glucose, fructose, etc.) in the growth medium. Therefore, by controlling the phosphorylation state of HPr, HPrK/P is a sensor enzyme that plays a major role in the regulation of carbon metabolism and sugar transport: it mediates carbon catabolite repression (CCR), and regulates PTS-catalyzed carbohydrate uptake and inducer exclusion. This Lacticaseibacillus casei (Lactobacillus casei) protein is HPr kinase/phosphorylase (hprK).